A 702-amino-acid polypeptide reads, in one-letter code: K(+)-insensitive pyrophosphate-energized proton pump (702 aa).

A run of 4 helical transmembrane segments spans residues 3-23, 63-83, 130-150, and 162-182; these read GIYL…ALTI, AVVF…GFLI, MLVA…LVGI, and VALG…GGIF. Lys184 lines the substrate pocket. 4 residues coordinate Mg(2+): Asp187, Asp191, Asn214, and Asp217. The next 6 helical transmembrane spans lie at 234-254, 255-275, 294-314, 329-349, 379-399, and 407-427; these read AVTV…VPAM, TSMM…SILG, GFLV…AIVP, GFDL…LIWV, GLAI…AAII, and LFGI…VVAL. Asp435 lines the Mg(2+) pocket. The next 4 helical transmembrane spans lie at 466-486, 517-537, 586-606, and 612-632; these read AVTK…LFAA, YVVV…SMGM, IIPS…ILGI, and AFSA…FVAI. The Ca(2+) site is built by Asp642, Asp668, and Asp672. Lys675 contacts substrate.

This sequence belongs to the H(+)-translocating pyrophosphatase (TC 3.A.10) family. K(+)-insensitive subfamily. Homodimer. Mg(2+) is required as a cofactor.

It localises to the cell inner membrane. The catalysed reaction is diphosphate + H2O + H(+)(in) = 2 phosphate + 2 H(+)(out). Its function is as follows. Proton pump that utilizes the energy of pyrophosphate hydrolysis as the driving force for proton movement across the membrane. Generates a proton motive force. The protein is K(+)-insensitive pyrophosphate-energized proton pump of Rhodospirillum rubrum (strain ATCC 11170 / ATH 1.1.1 / DSM 467 / LMG 4362 / NCIMB 8255 / S1).